The primary structure comprises 509 residues: MNEQQRLASQQVNSSTKKEEKDYSKYFESVYQPPSLKEAKKRGKEEVKIERDFGLPEEFRNFGTGRKFYIRTYGCQMNEHDTEVMAGIFTALGYEPTFSTEDADVVLLNTCAIRENAENKVFGELGHLKALKRRNPDLLIGVCGCMSQEESVVNKIMQKNQHVDMVFGTHNIHRLPYILKDAMFSKETVVEVWSKEGDVIENLPKVRRGDIKAWVNIMYGCDKFCTYCIVPYTRGKERSRRPEDIIQEIRHLAANGYKEITLLGQNVNAYGKDFEDIEYGLGDLMDELRKVDIARIRFTTSHPRDFDDHLIEVLGKGGNLVEHIHLPVQSGSTEMLKIMARKYSREHYLELVRKIKEAIPNAVLTTDIIVGFPNETDEQFEETMSLYREVGFDTAFTFIYSPREGTPAAKMKDNVPMEVKKERLQRLNALVNKLAIEKNDRYKGQIVEVLVDGESKNNPEVLAGYTRTNKLVNFVAPKSLIGQLVKVKVTDAKTWSLNGELVEEPIEVE.

Polar residues predominate over residues 1–15; sequence MNEQQRLASQQVNSS. The interval 1–26 is disordered; sequence MNEQQRLASQQVNSSTKKEEKDYSKY. Residues 16–25 are compositionally biased toward basic and acidic residues; it reads TKKEEKDYSK. The region spanning 66–184 is the MTTase N-terminal domain; the sequence is RKFYIRTYGC…LPYILKDAMF (119 aa). [4Fe-4S] cluster-binding residues include cysteine 75, cysteine 111, cysteine 145, cysteine 221, cysteine 225, and cysteine 228. The Radical SAM core domain maps to 207–437; it reads RRGDIKAWVN…NALVNKLAIE (231 aa). Residues 440 to 503 form the TRAM domain; sequence DRYKGQIVEV…TWSLNGELVE (64 aa).

Belongs to the methylthiotransferase family. MiaB subfamily. In terms of assembly, monomer. The cofactor is [4Fe-4S] cluster.

It localises to the cytoplasm. It carries out the reaction N(6)-dimethylallyladenosine(37) in tRNA + (sulfur carrier)-SH + AH2 + 2 S-adenosyl-L-methionine = 2-methylsulfanyl-N(6)-dimethylallyladenosine(37) in tRNA + (sulfur carrier)-H + 5'-deoxyadenosine + L-methionine + A + S-adenosyl-L-homocysteine + 2 H(+). Catalyzes the methylthiolation of N6-(dimethylallyl)adenosine (i(6)A), leading to the formation of 2-methylthio-N6-(dimethylallyl)adenosine (ms(2)i(6)A) at position 37 in tRNAs that read codons beginning with uridine. The polypeptide is tRNA-2-methylthio-N(6)-dimethylallyladenosine synthase (Bacillus cereus (strain ZK / E33L)).